The primary structure comprises 187 residues: Large ribosomal subunit protein eL18y (187 aa).

The tract at residues 151–187 (FGPAPGVPHSHSKPYVRAKGRKFEKARGKRKSRGFKV) is disordered. 2 stretches are compositionally biased toward basic residues: residues 160–170 (SHSKPYVRAKG) and 177–187 (RGKRKSRGFKV).

It belongs to the eukaryotic ribosomal protein eL18 family. As to quaternary structure, interacts with NIK1. Interacts directly with EXA1. As to expression, ubiquitous.

It is found in the cytoplasm. The protein is Large ribosomal subunit protein eL18y (RPL18B) of Arabidopsis thaliana (Mouse-ear cress).